The primary structure comprises 172 residues: MSDQQQANQQDDQPFFNIQRVYLKDMSLEQPNSPGIFLESEAPSVEVQVNVGASQLQEGIFEVVVTGTVTTKVQDKVAFLVEAHQAGIFDIRNVPVEQLDPLLGIACPTILYPYLRGNIADVITRAGFQAIHLSEINFQALYEQRLQAAMEEAQGQGGDSGIVMPDGSQARH.

The interval 153–172 (AQGQGGDSGIVMPDGSQARH) is disordered.

Belongs to the SecB family. In terms of assembly, homotetramer, a dimer of dimers. One homotetramer interacts with 1 SecA dimer.

Its subcellular location is the cytoplasm. Functionally, one of the proteins required for the normal export of preproteins out of the cell cytoplasm. It is a molecular chaperone that binds to a subset of precursor proteins, maintaining them in a translocation-competent state. It also specifically binds to its receptor SecA. In Cupriavidus metallidurans (strain ATCC 43123 / DSM 2839 / NBRC 102507 / CH34) (Ralstonia metallidurans), this protein is Protein-export protein SecB.